The chain runs to 55 residues: Large ribosomal subunit protein bL33 (55 aa).

This sequence belongs to the bacterial ribosomal protein bL33 family.

This Micrococcus luteus (strain ATCC 4698 / DSM 20030 / JCM 1464 / CCM 169 / CCUG 5858 / IAM 1056 / NBRC 3333 / NCIMB 9278 / NCTC 2665 / VKM Ac-2230) (Micrococcus lysodeikticus) protein is Large ribosomal subunit protein bL33.